Consider the following 623-residue polypeptide: ATP-dependent lipid A-core flippase (623 aa).

Helical transmembrane passes span 66–86, 103–123, 190–210, 290–310, and 317–337; these read LVLAVLLMAGAAATQPTLAVI, VWFLPLAVVGLILLRGICNFF, LVVIALIGVLLYMSWALTLII, LTPLTQVCISVAVGAVIAVAL, and ALTVGSFASFMAALAQIFDPI. The 283-residue stretch at 67-349 folds into the ABC transmembrane type-1 domain; that stretch reads VLAVLLMAGA…LTNLAGKMQK (283 aa). In terms of domain architecture, ABC transporter spans 382 to 618; sequence VEFRAVSHRF…NGLYASLYNM (237 aa). Residue 416–423 coordinates ATP; that stretch reads GRSGSGKT.

The protein belongs to the ABC transporter superfamily. Lipid exporter (TC 3.A.1.106) family. Homodimer.

The protein resides in the cell inner membrane. The catalysed reaction is ATP + H2O + lipid A-core oligosaccharideSide 1 = ADP + phosphate + lipid A-core oligosaccharideSide 2.. Involved in lipopolysaccharide (LPS) biosynthesis. Translocates lipid A-core from the inner to the outer leaflet of the inner membrane. Transmembrane domains (TMD) form a pore in the inner membrane and the ATP-binding domain (NBD) is responsible for energy generation. The protein is ATP-dependent lipid A-core flippase of Bordetella pertussis (strain Tohama I / ATCC BAA-589 / NCTC 13251).